Consider the following 345-residue polypeptide: Protein CHROMOSOME TRANSMISSION FIDELITY 7 (345 aa).

Residues 96-120 (RHCAECGAKYAPGDELDEKNHQSFH) form a CCHH-type zinc finger.

It belongs to the acetyltransferase family. ECO subfamily. Autoacetylated. Expressed in roots, stems, leaves, young seedlings and flower buds. Detected in the embryo, but not in the endosperm.

It is found in the nucleus. The protein localises to the cytoplasm. Its function is as follows. Acetyltransferase required for the establishment of sister chromatid cohesion. Involved in preservation of genome integrity and meiosis. Required for DNA repair and for the regulation of chromosome segregation during mitotic cell division. Knock-down mutants are extremely dwarf. Regulator of sister chromatid cohesion in meiosis which negatively regulates cohesin association with chromatin, acting as an antagonist of WAPL1 and WAPL2. The chain is Protein CHROMOSOME TRANSMISSION FIDELITY 7 from Arabidopsis thaliana (Mouse-ear cress).